We begin with the raw amino-acid sequence, 302 residues long: Homoserine O-acetyltransferase 1 (302 aa).

Cysteine 142 (acyl-thioester intermediate) is an active-site residue. Residues lysine 163 and serine 192 each contribute to the substrate site. Residue histidine 235 is the Proton acceptor of the active site. Glutamate 237 is a catalytic residue. Arginine 249 is a substrate binding site.

The protein belongs to the MetA family.

The protein resides in the cytoplasm. It carries out the reaction L-homoserine + acetyl-CoA = O-acetyl-L-homoserine + CoA. It functions in the pathway amino-acid biosynthesis; L-methionine biosynthesis via de novo pathway; O-acetyl-L-homoserine from L-homoserine: step 1/1. Functionally, transfers an acetyl group from acetyl-CoA to L-homoserine, forming acetyl-L-homoserine. This is Homoserine O-acetyltransferase 1 from Ilyobacter polytropus (strain ATCC 51220 / DSM 2926 / LMG 16218 / CuHBu1).